A 43-amino-acid polypeptide reads, in one-letter code: Protein PsbN (43 aa).

Residues leucine 5–isoleucine 25 form a helical membrane-spanning segment.

This sequence belongs to the PsbN family.

The protein resides in the plastid. It localises to the chloroplast thylakoid membrane. May play a role in photosystem I and II biogenesis. In Cyanidium caldarium (Red alga), this protein is Protein PsbN.